We begin with the raw amino-acid sequence, 573 residues long: Mitochondrial distribution and morphology protein 34 (573 aa).

The region spanning 1 to 195 is the SMP-LTD domain; the sequence is MAFNFNWSPL…LPAIIHRLSL (195 aa). Disordered regions lie at residues 301–326, 349–433, 499–521, and 550–573; these read EGLG…SSPL, FSGY…RFPN, SREK…ITDA, and LVNN…AYGQ. Residues 306–316 show a composition bias toward low complexity; sequence GLMSPGSPALS. The span at 360–373 shows a compositional bias: basic residues; the sequence is RHTKARPTKKRKKR. The span at 374-385 shows a compositional bias: basic and acidic residues; the sequence is VVDLRKQSKPTD. The span at 396 to 409 shows a compositional bias: low complexity; it reads TETSTASTTFSSST.

The protein belongs to the MDM34 family. In terms of assembly, component of the ER-mitochondria encounter structure (ERMES) or MDM complex, composed of MMM1, MDM10, MDM12 and MDM34.

Its subcellular location is the mitochondrion outer membrane. Component of the ERMES/MDM complex, which serves as a molecular tether to connect the endoplasmic reticulum (ER) and mitochondria. Components of this complex are involved in the control of mitochondrial shape and protein biogenesis, and function in nonvesicular lipid trafficking between the ER and mitochondria. MDM34 is required for the interaction of the ER-resident membrane protein MMM1 and the outer mitochondrial membrane-resident beta-barrel protein MDM10. This Uncinocarpus reesii (strain UAMH 1704) protein is Mitochondrial distribution and morphology protein 34.